The following is a 512-amino-acid chain: Cytochrome P450 84A4 (512 aa).

Residues 7 to 24 traverse the membrane as a helical segment; it reads LIVLVPLLLFLFPHLLLR. Residue C447 participates in heme binding.

Belongs to the cytochrome P450 family. The cofactor is heme. In terms of tissue distribution, expressed in seedlings, roots, stems and inflorescence nodes. Low or no expression in leaves, flowers, seeds and lignifying tissue.

Its subcellular location is the membrane. Functionally, cytochrome P450 involved in the production of catechol-substituted substrates needed for the arabidopyrones biosynthesis. Converts p-coumaraldehyde into caffealdehyde. In Arabidopsis thaliana (Mouse-ear cress), this protein is Cytochrome P450 84A4 (CYP84A4).